We begin with the raw amino-acid sequence, 245 residues long: Eukaryotic translation initiation factor 6 (245 aa).

This sequence belongs to the eIF-6 family. Monomer. Associates with the 60S ribosomal subunit.

The protein resides in the cytoplasm. It is found in the nucleus. The protein localises to the nucleolus. In terms of biological role, binds to the 60S ribosomal subunit and prevents its association with the 40S ribosomal subunit to form the 80S initiation complex in the cytoplasm. May also be involved in ribosome biogenesis. The sequence is that of Eukaryotic translation initiation factor 6 (eif6) from Danio rerio (Zebrafish).